Reading from the N-terminus, the 24-residue chain is 47 kDa cell wall protein (24 aa).

The protein localises to the secreted. It is found in the cell wall. The polypeptide is 47 kDa cell wall protein (Nicotiana tabacum (Common tobacco)).